The following is a 281-amino-acid chain: Pantothenate synthetase (281 aa).

Position 30–37 (30–37 (MGYLHEGH)) interacts with ATP. The active-site Proton donor is histidine 37. A (R)-pantoate-binding site is contributed by glutamine 61. Position 61 (glutamine 61) interacts with beta-alanine. 147–150 (GEKD) is an ATP binding site. (R)-pantoate is bound at residue glutamine 153. Residues isoleucine 176 and 184–187 (KSSR) contribute to the ATP site.

This sequence belongs to the pantothenate synthetase family. In terms of assembly, homodimer.

The protein localises to the cytoplasm. It carries out the reaction (R)-pantoate + beta-alanine + ATP = (R)-pantothenate + AMP + diphosphate + H(+). It functions in the pathway cofactor biosynthesis; (R)-pantothenate biosynthesis; (R)-pantothenate from (R)-pantoate and beta-alanine: step 1/1. Catalyzes the condensation of pantoate with beta-alanine in an ATP-dependent reaction via a pantoyl-adenylate intermediate. The sequence is that of Pantothenate synthetase from Clostridium botulinum (strain Loch Maree / Type A3).